The following is a 31-amino-acid chain: Conserved oligomeric Golgi complex subunit 5 (31 aa).

This sequence belongs to the COG5 family. Component of the conserved oligomeric Golgi complex which is composed of eight different subunits and is required for normal Golgi morphology and localization.

The protein localises to the cytoplasm. The protein resides in the cytosol. It is found in the golgi apparatus membrane. Functionally, required for normal Golgi function. This chain is Conserved oligomeric Golgi complex subunit 5 (COG5), found in Bos taurus (Bovine).